A 370-amino-acid polypeptide reads, in one-letter code: Translocating chain-associated membrane protein 2 (370 aa).

At 1–22 (MAFRRRTKSYPLFSQEFIIHNH) the chain is on the cytoplasmic side. A helical transmembrane segment spans residues 23 to 43 (ADIGFCLVLCVLIGLMFEVTA). Residues 44-75 (KTAFLFILPQYNISVPTADSETVHYHYGPKDL) are Extracellular-facing. An N-linked (GlcNAc...) asparagine glycan is attached at Asn-55. A helical transmembrane segment spans residues 76 to 96 (VTILFYVVITIIFHAVVQEYI). Residues 97 to 119 (LDKISKRLHLSKVKHSKFNESGQ) are Cytoplasmic-facing. A TLC domain is found at 112-321 (SKFNESGQLL…HSQLRHWREY (210 aa)). A helical membrane pass occupies residues 120–140 (LLVFHLSAVAWCFYVIVTEGY). The Extracellular portion of the chain corresponds to 141–159 (LTNPRSLWEDYPHVYLSFQ). A helical transmembrane segment spans residues 160-180 (VKFFYLGQLAYWLHSLPELYF). Over 181–191 (QKVRKEEVPRQ) the chain is Cytoplasmic. The chain crosses the membrane as a helical span at residues 192–209 (LQYICLYLLHITGAYLLN). Topologically, residues 210-214 (LSRLG) are extracellular. Residues 215-235 (LILLLLQYSTEALFHMARLFH) form a helical membrane-spanning segment. Over 236–250 (FADENNERLFNAWAA) the chain is Cytoplasmic. A helical transmembrane segment spans residues 251 to 271 (VFGVTRLFILTLAVLTIGFGL). The Extracellular portion of the chain corresponds to 272–287 (ARVENQVFDPEKGNFN). The helical transmembrane segment at 288 to 308 (TLPCRLGMLLLVCVAQAWLMW) threads the bilayer. Topologically, residues 309–370 (RFIHSQLRHW…SSRTKKLKSP (62 aa)) are cytoplasmic. Residues 332–370 (SAVPRPPAKLLKREPGYHENGVVKAENGTSSRTKKLKSP) form a disordered region.

It belongs to the TRAM family. In terms of assembly, interacts with COL1A1. Interacts with SERCA2B.

It is found in the membrane. Functionally, necessary for collagen type I synthesis. May couple the activity of the ER Ca(2+) pump SERCA2B with the activity of the translocon. This coupling may increase the local Ca(2+) concentration at the site of collagen synthesis, and a high Ca(2+) concentration may be necessary for the function of molecular chaperones involved in collagen folding. Required for proper insertion of the first transmembrane helix N-terminus of TM4SF20 into the ER lumen, may act as a ceramide sensor for regulated alternative translocation (RAT). The sequence is that of Translocating chain-associated membrane protein 2 (Tram2) from Mus musculus (Mouse).